Reading from the N-terminus, the 150-residue chain is 3-hydroxyacyl-[acyl-carrier-protein] dehydratase FabZ (150 aa).

The active site involves His57.

Belongs to the thioester dehydratase family. FabZ subfamily.

It localises to the cytoplasm. It catalyses the reaction a (3R)-hydroxyacyl-[ACP] = a (2E)-enoyl-[ACP] + H2O. In terms of biological role, involved in unsaturated fatty acids biosynthesis. Catalyzes the dehydration of short chain beta-hydroxyacyl-ACPs and long chain saturated and unsaturated beta-hydroxyacyl-ACPs. This Mannheimia succiniciproducens (strain KCTC 0769BP / MBEL55E) protein is 3-hydroxyacyl-[acyl-carrier-protein] dehydratase FabZ.